Consider the following 181-residue polypeptide: UPF0232 protein SAV_4320 (181 aa).

The span at 1-10 (MSDTPAQTPE) shows a compositional bias: polar residues. Disordered regions lie at residues 1 to 64 (MSDT…GRDP) and 156 to 181 (QGPG…DTYG). The span at 30–39 (AAKEQARARG) shows a compositional bias: basic and acidic residues.

This sequence belongs to the UPF0232 family.

In Streptomyces avermitilis (strain ATCC 31267 / DSM 46492 / JCM 5070 / NBRC 14893 / NCIMB 12804 / NRRL 8165 / MA-4680), this protein is UPF0232 protein SAV_4320.